Reading from the N-terminus, the 174-residue chain is Small ribosomal subunit protein uS5 (174 aa).

Positions 20 to 83 (IEDQLVAINR…EAGKKRMIKV (64 aa)) constitute an S5 DRBM domain.

Belongs to the universal ribosomal protein uS5 family. As to quaternary structure, part of the 30S ribosomal subunit. Contacts proteins S4 and S8.

Its function is as follows. With S4 and S12 plays an important role in translational accuracy. In terms of biological role, located at the back of the 30S subunit body where it stabilizes the conformation of the head with respect to the body. This is Small ribosomal subunit protein uS5 from Lactobacillus gasseri (strain ATCC 33323 / DSM 20243 / BCRC 14619 / CIP 102991 / JCM 1131 / KCTC 3163 / NCIMB 11718 / NCTC 13722 / AM63).